Consider the following 239-residue polypeptide: MDLRLIFGPTCTGKTSTAIALAQQTGLPVLSLDRVQCCPQLSTGSGRPTVEELKGTTRLYLDDRPLVKGIITAKQAHERLIAEVHNHEAKGGLILEGGSISLLRCMAQSRYWNADFRWHIIRNELADEESFMSVAKTRVKQMLRPSAGLSIIQELVQLWREPRLRPILEGIDGYRYALLFATQNQITPDMLLQLDADMENKLIHGIAQEFLIHARRQEQKFPLVGATAVEAFEGPPFRM.

It belongs to the isopentenyl transferase family.

It carries out the reaction dimethylallyl diphosphate + AMP = N(6)-(dimethylallyl)adenosine 5'-phosphate + diphosphate. Functionally, transfers dimethylallyl groups to AMP as part of the biosynthesis of cytokinin phytohormones. This is Adenylate dimethylallyltransferase (ipt) from Rhizobium radiobacter (Agrobacterium tumefaciens).